A 196-amino-acid chain; its full sequence is Pantothenic acid transporter PanT (196 aa).

Helical transmembrane passes span 10–30, 35–55, 58–78, 99–119, 131–151, and 161–181; these read AILA…QFVI, FPVK…ILGW, GAFL…IVTT, WGLF…YFVY, AAFA…FLFF, and YLLG…AVIL.

As to quaternary structure, in E.coli forms a stable energy-coupling factor (ECF) transporter complex composed of 2 membrane-embedded substrate-binding protein (S component), 2 ATP-binding proteins (A and A' components) and 2 transmembrane proteins (T component), probably with a stoichiometry of 2:1:1:2. May be able to interact with more than 1 S component at a time.

It localises to the cell membrane. Functionally, probably a pantothenic acid-binding protein that interacts with the energy-coupling factor (ECF) ABC-transporter complex. Unlike classic ABC transporters this ECF transporter provides the energy necessary to transport a number of different substrates. The substrates themselves are bound by transmembrane, not extracytoplasmic soluble proteins. The polypeptide is Pantothenic acid transporter PanT (panT) (Lactococcus lactis subsp. cremoris (strain MG1363)).